Here is a 607-residue protein sequence, read N- to C-terminus: Autophagy-related protein 16-1 (607 aa).

Positions 13–43 (WKRHISEQLRRRDRLQRQAFEEIILQYNKLL) are interaction with ATG5. Positions 79–230 (DSQLQEMAQL…QKELAEAAKE (152 aa)) form a coiled coil. A Phosphoserine modification is found at Ser-139. Residues 207-230 (AENEKDSRRRQARLQKELAEAAKE) are WIPI2-binding. The interval 230-242 (EPLPVEQDDDIEV) is RB1CC1-binding. Residues Ser-269 and Ser-287 each carry the phosphoserine modification. Positions 296–299 (DNVD) match the Caspase cleavage motif. 7 WD repeats span residues 320 to 359 (AHDG…CEFK), 364 to 403 (GSNA…LRHT), 406 to 445 (GHSG…CIKT), 447 to 484 (FAGS…IVRE), 486 to 525 (ELLG…IKQT), 532 to 573 (KCGS…KVLS), and 575 to 607 (QHSS…WAQY).

It belongs to the WD repeat ATG16 family. Homodimer. Homooligomer. Heterooligomer with ATG16L2. Interacts with WIPI1. Interacts with WIPI2. Interacts with RB1CC1; the interaction is required for ULK1 complex-dependent autophagy. Interacts with ATG5. Part of the minor complex composed of 4 sets of ATG12-ATG5 and ATG16L1 (400 kDa); this complex interacts with ATG3 leading to disruption of ATG7 interaction and promotion of ATG8-like proteins lipidation. Part of the major complex composed of 8 sets of ATG12-ATG5 and ATG16L1 (800 kDa). Interacts with RAB33B (GTP- and GDP-bound forms); the complex consists of a tetramer where two RAB33B molecules bind independently one molecule of the ATG16L1 homodimer; the interaction promotes ATG12-ATG5-ATG16L1 complex recruitment to phagophores. Interacts (via WD repeats) with TMEM59; the interaction mediates unconventional autophagic activity of TMEM59. Interacts with TLR2. Interacts (via WD repeats) with MEFV. Interacts with PPP1CA; the interaction dephosphorylates ATG16L1 causing dissociation of ATG12-ATG5-ATG16L1 complex. Interacts (via N-terminal) with CLTC. Interacts with NOD1. Interacts with NOD2. Interacts with TUFM. Interacts with TRIM16. Interacts (via WD repeats) with SPATA33. Interacts with IRGM. In terms of processing, proteolytic cleavage by activated CASP3 leads to degradation and may regulate autophagy upon cellular stress and apoptotic stimuli. Post-translationally, phosphorylation at Ser-139 promotes association with the ATG12-ATG5 conjugate to form the ATG12-ATG5-ATG16L1 complex.

Its subcellular location is the cytoplasm. It is found in the preautophagosomal structure membrane. The protein localises to the endosome membrane. It localises to the lysosome membrane. Plays an essential role in both canonical and non-canonical autophagy: interacts with ATG12-ATG5 to mediate the lipidation to ATG8 family proteins (MAP1LC3A, MAP1LC3B, MAP1LC3C, GABARAPL1, GABARAPL2 and GABARAP). Acts as a molecular hub, coordinating autophagy pathways via distinct domains that support either canonical or non-canonical signaling. During canonical autophagy, interacts with ATG12-ATG5 to mediate the conjugation of phosphatidylethanolamine (PE) to ATG8 proteins, to produce a membrane-bound activated form of ATG8. Thereby, controls the elongation of the nascent autophagosomal membrane. As part of the ATG8 conjugation system with ATG5 and ATG12, required for recruitment of LRRK2 to stressed lysosomes and induction of LRRK2 kinase activity in response to lysosomal stress. Also involved in non-canonical autophagy, a parallel pathway involving conjugation of ATG8 proteins to single membranes at endolysosomal compartments, probably by catalyzing conjugation of phosphatidylserine (PS) to ATG8. Non-canonical autophagy plays a key role in epithelial cells to limit lethal infection by influenza A (IAV) virus. Regulates mitochondrial antiviral signaling (MAVS)-dependent type I interferon (IFN-I) production. Negatively regulates NOD1- and NOD2-driven inflammatory cytokine response. Instead, promotes an autophagy-dependent antibacterial pathway together with NOD1 or NOD2. Plays a role in regulating morphology and function of Paneth cell. This Pongo abelii (Sumatran orangutan) protein is Autophagy-related protein 16-1.